Consider the following 192-residue polypeptide: MAP6 domain-containing protein 1 (192 aa).

S-palmitoyl cysteine attachment occurs at residues Cys5, Cys10, and Cys11. The segment at 36-106 (LESEEPIPGG…RTKPSATPGR (71 aa)) is disordered. Phosphoserine is present on Ser38. Low complexity predominate over residues 43 to 58 (PGGVPSRRGPSPAGSR). 2 mn regions span residues 123–136 (TTSYRQEFQAWTGV) and 158–170 (DGSPRAGFQAPEV). A Phosphoserine modification is found at Ser160.

This sequence belongs to the STOP family. In terms of assembly, interacts with calmodulin. Palmitoylated. Palmitoylation enhances association with microtubules.

The protein localises to the golgi apparatus. The protein resides in the cytoplasm. It is found in the cytoskeleton. May have microtubule-stabilizing activity. The chain is MAP6 domain-containing protein 1 (MAP6D1) from Bos taurus (Bovine).